A 282-amino-acid polypeptide reads, in one-letter code: Putative 4-diphosphocytidyl-2-C-methyl-D-erythritol kinase (282 aa).

K10 is an active-site residue. Residue 94–104 (PICAGLGGGSS) participates in ATP binding. D136 is an active-site residue.

This sequence belongs to the GHMP kinase family. IspE subfamily.

The enzyme catalyses 4-CDP-2-C-methyl-D-erythritol + ATP = 4-CDP-2-C-methyl-D-erythritol 2-phosphate + ADP + H(+). Catalyzes the phosphorylation of the position 2 hydroxy group of 4-diphosphocytidyl-2C-methyl-D-erythritol. The chain is Putative 4-diphosphocytidyl-2-C-methyl-D-erythritol kinase (ipk) from Streptococcus mutans serotype c (strain ATCC 700610 / UA159).